Reading from the N-terminus, the 244-residue chain is 3-oxoacyl-[acyl-carrier-protein] reductase FabG (244 aa).

NADP(+)-binding positions include 12–15 and Thr-37; that span reads GANQ. 2 residues coordinate Ca(2+): Lys-50 and Gly-53. NADP(+) contacts are provided by residues 59–60 and Asn-86; that span reads DL. Ser-138 provides a ligand contact to substrate. Asn-145 is a Ca(2+) binding site. Tyr-151 (proton acceptor) is an active-site residue. NADP(+)-binding positions include 151–155 and Ile-184; that span reads YSASK. Ca(2+) contacts are provided by Gln-233 and Thr-234.

This sequence belongs to the short-chain dehydrogenases/reductases (SDR) family. Homotetramer.

It catalyses the reaction a (3R)-hydroxyacyl-[ACP] + NADP(+) = a 3-oxoacyl-[ACP] + NADPH + H(+). The protein operates within lipid metabolism; fatty acid biosynthesis. Catalyzes the NADPH-dependent reduction of beta-ketoacyl-ACP substrates to beta-hydroxyacyl-ACP products, the first reductive step in the elongation cycle of fatty acid biosynthesis. The polypeptide is 3-oxoacyl-[acyl-carrier-protein] reductase FabG (fabG) (Buchnera aphidicola subsp. Schizaphis graminum (strain Sg)).